The following is a 133-amino-acid chain: Ribosome-binding factor A (133 aa).

This sequence belongs to the RbfA family. Monomer. Binds 30S ribosomal subunits, but not 50S ribosomal subunits or 70S ribosomes.

It is found in the cytoplasm. In terms of biological role, one of several proteins that assist in the late maturation steps of the functional core of the 30S ribosomal subunit. Associates with free 30S ribosomal subunits (but not with 30S subunits that are part of 70S ribosomes or polysomes). Required for efficient processing of 16S rRNA. May interact with the 5'-terminal helix region of 16S rRNA. The sequence is that of Ribosome-binding factor A from Nostoc sp. (strain PCC 7120 / SAG 25.82 / UTEX 2576).